Consider the following 210-residue polypeptide: Small ribosomal subunit protein uS3 (210 aa).

Positions Ile39–Lys107 constitute a KH type-2 domain.

This sequence belongs to the universal ribosomal protein uS3 family. Part of the 30S ribosomal subunit. Forms a tight complex with proteins S10 and S14.

Binds the lower part of the 30S subunit head. Binds mRNA in the 70S ribosome, positioning it for translation. The protein is Small ribosomal subunit protein uS3 of Opitutus terrae (strain DSM 11246 / JCM 15787 / PB90-1).